The primary structure comprises 194 residues: RNA polymerase II subunit A C-terminal domain phosphatase SSU72 like protein 4 (194 aa).

It belongs to the SSU72 phosphatase family.

Its subcellular location is the nucleus. The enzyme catalyses O-phospho-L-seryl-[protein] + H2O = L-seryl-[protein] + phosphate. It catalyses the reaction O-phospho-L-threonyl-[protein] + H2O = L-threonyl-[protein] + phosphate. Its function is as follows. Protein phosphatase that catalyzes the dephosphorylation of the C-terminal domain of RNA polymerase II. Plays a role in RNA processing and termination. This chain is RNA polymerase II subunit A C-terminal domain phosphatase SSU72 like protein 4, found in Homo sapiens (Human).